Consider the following 254-residue polypeptide: MARIAVTGAAGNVGRVTVEALASDHDVTPITHREREGLDSVILDVRDEDALTEAFEGHDIVVHLAANPNPDAAWDSVYEVNIGGTYNVYEAALAADIDRLVFASTNHVHQMYNIADATRPETLAADAEAVGVSDPPRPDSYYGVSKVFGEALGNYYADRHGLEVLNLRIGWLLTADEVREKMDEEESVARYVRAMWLSPGDCEQGMRRAVEASLPDSPLAVNLISANDDRYLSLTETMRAIGYRPRDNSATVVE.

Tyrosine 142 (proton acceptor) is an active-site residue. Positions 142 and 146 each coordinate NAD(+).

It belongs to the NAD(P)-dependent epimerase/dehydratase family. In terms of assembly, homotetramer.

The enzyme catalyses alpha-L-arabinopyanose + NAD(+) = L-arabinono-1,4-lactone + NADH + H(+). The catalysed reaction is alpha-L-arabinopyanose + NADP(+) = L-arabinono-1,4-lactone + NADPH + H(+). It participates in carbohydrate degradation; L-arabinose degradation via L-arabinono-1,4-lactone pathway. Its function is as follows. L-AraDH initiates the degradation of L-arabinose. Catalyzes the NAD(P)(+)-dependent conversion of L-arabinose to L-arabino-gamma-lactone. It is highly specific for L-arabinose as substrate and can use both NADP(+) and NAD(+) as electron acceptor, with a slight preference for NADP(+). The sequence is that of L-arabinose 1-dehydrogenase (NAD(P)(+)) from Haloferax volcanii (strain ATCC 29605 / DSM 3757 / JCM 8879 / NBRC 14742 / NCIMB 2012 / VKM B-1768 / DS2) (Halobacterium volcanii).